Here is a 422-residue protein sequence, read N- to C-terminus: Replication factor C large subunit (422 aa).

Residue 63 to 70 coordinates ATP; sequence GPPGVGKT.

This sequence belongs to the activator 1 small subunits family. RfcL subfamily. In terms of assembly, heteromultimer composed of small subunits (RfcS) and large subunits (RfcL).

In terms of biological role, part of the RFC clamp loader complex which loads the PCNA sliding clamp onto DNA. The polypeptide is Replication factor C large subunit (Pyrobaculum aerophilum (strain ATCC 51768 / DSM 7523 / JCM 9630 / CIP 104966 / NBRC 100827 / IM2)).